The sequence spans 417 residues: Serine hydroxymethyltransferase 4 (417 aa).

Residues L121 and 125-127 (GHL) each bind (6S)-5,6,7,8-tetrahydrofolate. N6-(pyridoxal phosphate)lysine is present on K230. Residue 355–357 (SPF) participates in (6S)-5,6,7,8-tetrahydrofolate binding.

This sequence belongs to the SHMT family. Homodimer. Requires pyridoxal 5'-phosphate as cofactor.

Its subcellular location is the cytoplasm. It carries out the reaction (6R)-5,10-methylene-5,6,7,8-tetrahydrofolate + glycine + H2O = (6S)-5,6,7,8-tetrahydrofolate + L-serine. It participates in one-carbon metabolism; tetrahydrofolate interconversion. It functions in the pathway amino-acid biosynthesis; glycine biosynthesis; glycine from L-serine: step 1/1. Its function is as follows. Catalyzes the reversible interconversion of serine and glycine with tetrahydrofolate (THF) serving as the one-carbon carrier. This reaction serves as the major source of one-carbon groups required for the biosynthesis of purines, thymidylate, methionine, and other important biomolecules. Also exhibits THF-independent aldolase activity toward beta-hydroxyamino acids, producing glycine and aldehydes, via a retro-aldol mechanism. This is Serine hydroxymethyltransferase 4 from Colwellia psychrerythraea (strain 34H / ATCC BAA-681) (Vibrio psychroerythus).